An 89-amino-acid chain; its full sequence is Small ribosomal subunit protein uS15 (89 aa).

The segment covering 1 to 20 (MSITAERKAELIKTHARGEA) has biased composition (basic and acidic residues). Residues 1-24 (MSITAERKAELIKTHARGEADTGS) form a disordered region.

It belongs to the universal ribosomal protein uS15 family. In terms of assembly, part of the 30S ribosomal subunit. Forms a bridge to the 50S subunit in the 70S ribosome, contacting the 23S rRNA.

In terms of biological role, one of the primary rRNA binding proteins, it binds directly to 16S rRNA where it helps nucleate assembly of the platform of the 30S subunit by binding and bridging several RNA helices of the 16S rRNA. Functionally, forms an intersubunit bridge (bridge B4) with the 23S rRNA of the 50S subunit in the ribosome. This is Small ribosomal subunit protein uS15 from Phenylobacterium zucineum (strain HLK1).